The chain runs to 342 residues: Inositol-tetrakisphosphate 1-kinase 5 (342 aa).

The 1D-myo-inositol 1,3,4-trisphosphate site is built by Lys25 and Lys67. Residues Arg102 and Lys154 each coordinate ATP. His165 and Lys197 together coordinate 1D-myo-inositol 1,3,4-trisphosphate. ATP-binding positions include Gln186–Lys197 and Ser212. Mg(2+) contacts are provided by Asp283, Asp298, and Asn300. Asn300 is a 1D-myo-inositol 1,3,4-trisphosphate binding site.

The protein belongs to the ITPK1 family. Monomer. Requires Mg(2+) as cofactor. As to expression, expressed in roots, leaves, flowers, anthers and embryos.

The catalysed reaction is 1D-myo-inositol 3,4,5,6-tetrakisphosphate + ATP = 1D-myo-inositol 1,3,4,5,6-pentakisphosphate + ADP + H(+). The enzyme catalyses 1D-myo-inositol 1,3,4-trisphosphate + ATP = 1D-myo-inositol 1,3,4,5-tetrakisphosphate + ADP + H(+). It catalyses the reaction 1D-myo-inositol 1,3,4-trisphosphate + ATP = 1D-myo-inositol 1,3,4,6-tetrakisphosphate + ADP + H(+). Functionally, kinase that can phosphorylate various inositol polyphosphate such as Ins(3,4,5,6)P4 or Ins(1,3,4)P3 and participates in phytic acid biosynthesis in developing seeds. Phytic acid is the primary storage form of phosphorus in cereal grains and other plant seeds. In Oryza sativa subsp. japonica (Rice), this protein is Inositol-tetrakisphosphate 1-kinase 5 (ITPK5).